The sequence spans 692 residues: E3 ubiquitin-protein ligase MARCHF7 (692 aa).

An N-acetylmethionine modification is found at M1. 6 disordered regions span residues 1–165 (MESK…SHRS), 201–280 (STNH…GRRT), 296–343 (FFSR…RASE), 360–425 (LSQN…HLFR), 440–474 (SLGA…RNTG), and 512–532 (SSAD…PEKL). The span at 37-48 (YHSRDSSFRLDS) shows a compositional bias: basic and acidic residues. 2 stretches are compositionally biased toward polar residues: residues 61 to 83 (PYQS…SQNQ) and 95 to 132 (SCTN…SSMV). Basic and acidic residues predominate over residues 140 to 153 (LMRERRDLERRRDS). Polar residues predominate over residues 201–214 (STNHQLPSEHQTVP). The span at 215-233 (SSRDSSRSSFRSHFSPRQS) shows a compositional bias: low complexity. Positions 235–272 (SFRNSSHPAFSYLSSRNETPTISSSERAGSSQRPFQES) are enriched in polar residues. Residues 296-305 (FFSRRSSQDS) are compositionally biased toward low complexity. Positions 306 to 336 (LNTRSLSSENYISPRTLTSQSRNNGASSSEV) are enriched in polar residues. Phosphoserine is present on residues S318 and S389. Residues 450–462 (ASGASGNASASGS) show a composition bias toward low complexity. Positions 516 to 532 (GKSEKAKSAPSRDPEKL) are enriched in basic and acidic residues. The segment at 545–615 (DEEEEGDLCR…ELCKEKLQLN (71 aa)) adopts an RING-CH-type zinc-finger fold. Residues C553, C556, C571, C573, H581, C584, C605, and C608 each coordinate Zn(2+). Residue T687 is modified to Phosphothreonine. The residue at position 688 (S688) is a Phosphoserine.

The protein localises to the cytoplasm. It carries out the reaction S-ubiquitinyl-[E2 ubiquitin-conjugating enzyme]-L-cysteine + [acceptor protein]-L-lysine = [E2 ubiquitin-conjugating enzyme]-L-cysteine + N(6)-ubiquitinyl-[acceptor protein]-L-lysine.. The protein operates within protein modification; protein ubiquitination. Its function is as follows. E3 ubiquitin-protein ligase which may specifically enhance the E2 activity of HIP2. E3 ubiquitin ligases accept ubiquitin from an E2 ubiquitin-conjugating enzyme in the form of a thioester and then directly transfer the ubiquitin to targeted substrates. May be involved in T-cell proliferation by regulating LIF secretion. May play a role in lysosome homeostasis. Promotes 'Lys-6', 'Lys-11' and 'Lys-63'-linked mixed polyubiquitination on ATG14 leading to the inhibition of autophagy by impairing the interaction between ATG14 and STX7. Participates in the dopamine-mediated negative regulation of the NLRP3 inflammasome by promoting its uibiquitination and subsequent degradation. In Rattus norvegicus (Rat), this protein is E3 ubiquitin-protein ligase MARCHF7 (Marchf7).